The sequence spans 323 residues: Serine/threonine-protein kinase-transforming protein raf (323 aa).

In terms of domain architecture, Protein kinase spans 24-284 (VMLSTRIGSG…PQILSSIELL (261 aa)). ATP is bound by residues 30–38 (IGSGSFGTV) and lysine 50. The active-site Proton acceptor is the aspartate 143.

Belongs to the protein kinase superfamily. TKL Ser/Thr protein kinase family. RAF subfamily.

It catalyses the reaction L-seryl-[protein] + ATP = O-phospho-L-seryl-[protein] + ADP + H(+). The catalysed reaction is L-threonyl-[protein] + ATP = O-phospho-L-threonyl-[protein] + ADP + H(+). The chain is Serine/threonine-protein kinase-transforming protein raf (V-RAF) from Murine sarcoma virus 3611.